A 416-amino-acid polypeptide reads, in one-letter code: Na(+)/H(+) antiporter NhaA (416 aa).

The next 11 membrane-spanning stretches (helical) occupy residues 39–59 (GIVL…PWAA), 82–102 (LHFW…GLEI), 119–139 (LPVL…LALV), 146–166 (GWAV…ALLG), 175–195 (VFLL…IALF), 198–218 (GGLQ…VLLL), 234–254 (AVLW…GVVL), 281–301 (PWVT…VALG), 315–335 (LLMA…VLLA), 353–373 (WGGL…AIFI), and 390–410 (GVLL…WWLQ).

This sequence belongs to the NhaA Na(+)/H(+) (TC 2.A.33) antiporter family.

The protein localises to the cell inner membrane. The enzyme catalyses Na(+)(in) + 2 H(+)(out) = Na(+)(out) + 2 H(+)(in). Na(+)/H(+) antiporter that extrudes sodium in exchange for external protons. The polypeptide is Na(+)/H(+) antiporter NhaA (Acidovorax sp. (strain JS42)).